Here is a 295-residue protein sequence, read N- to C-terminus: Acetylglutamate kinase (295 aa).

Substrate contacts are provided by residues 70 to 71 (GG), Arg-92, and Asn-191.

The protein belongs to the acetylglutamate kinase family. ArgB subfamily.

Its subcellular location is the cytoplasm. It catalyses the reaction N-acetyl-L-glutamate + ATP = N-acetyl-L-glutamyl 5-phosphate + ADP. Its pathway is amino-acid biosynthesis; L-arginine biosynthesis; N(2)-acetyl-L-ornithine from L-glutamate: step 2/4. Its function is as follows. Catalyzes the ATP-dependent phosphorylation of N-acetyl-L-glutamate. This chain is Acetylglutamate kinase, found in Mycobacterium avium (strain 104).